The primary structure comprises 164 residues: Arginine repressor (164 aa).

It belongs to the ArgR family.

The protein resides in the cytoplasm. The protein operates within amino-acid biosynthesis; L-arginine biosynthesis [regulation]. Functionally, regulates arginine biosynthesis genes. This chain is Arginine repressor, found in Thermus thermophilus (strain ATCC BAA-163 / DSM 7039 / HB27).